The chain runs to 238 residues: MRHLHHQTSQTKLWAVIPAAGSGSRFSKTELKQYQYIQDATVIEHTVKRLSQLPLTGYVLAIGKQDTFASTLSFQDKHKAHFCNGGVERVHSVLNALNYLSQIADEDDWVLVHDAARPCVTFECLNTLVKNAIETNQSAILAIPVRDTLKQVNQEQQIEKTVSRELLWQAQTPQIAKIGILKKAIETALKNNLTITDEASALESIGESVQVVMGRSDNIKITYPDDLELARLILQSQN.

Belongs to the IspD/TarI cytidylyltransferase family. IspD subfamily.

The catalysed reaction is 2-C-methyl-D-erythritol 4-phosphate + CTP + H(+) = 4-CDP-2-C-methyl-D-erythritol + diphosphate. It participates in isoprenoid biosynthesis; isopentenyl diphosphate biosynthesis via DXP pathway; isopentenyl diphosphate from 1-deoxy-D-xylulose 5-phosphate: step 2/6. Functionally, catalyzes the formation of 4-diphosphocytidyl-2-C-methyl-D-erythritol from CTP and 2-C-methyl-D-erythritol 4-phosphate (MEP). The polypeptide is 2-C-methyl-D-erythritol 4-phosphate cytidylyltransferase (Acinetobacter baumannii (strain SDF)).